Here is an 801-residue protein sequence, read N- to C-terminus: Transferrin receptor protein 2 (801 aa).

Residues 1-83 are Cytoplasmic-facing; the sequence is MERLWGLFQR…WAAAGRRAAP (83 aa). The tract at residues 16 to 45 is disordered; the sequence is PRSSQTVYQRVEGPRKGHLEEEEEDGEEGA. An Endocytosis signal motif is present at residues 23-26; sequence YQRV. Positions 35–45 are enriched in acidic residues; sequence EEEEEDGEEGA. A helical; Signal-anchor for type II membrane protein transmembrane segment spans residues 84 to 104; the sequence is YLVLTALLIFTGAFLLGYVAF. The Extracellular portion of the chain corresponds to 105–801; the sequence is RGSCQACGDS…GDVWNIDNNF (697 aa). 4 N-linked (GlcNAc...) asparagine glycosylation sites follow: Asn-240, Asn-339, Asn-540, and Asn-754.

Belongs to the peptidase M28 family. M28B subfamily. In terms of assembly, homodimer. Predominantly expressed in liver. While the alpha form is also expressed in spleen, lung, muscle, prostate and peripheral blood mononuclear cells, the beta form is expressed in all tissues tested, albeit weakly.

It localises to the cell membrane. The protein resides in the cytoplasm. Functionally, mediates cellular uptake of transferrin-bound iron in a non-iron dependent manner. May be involved in iron metabolism, hepatocyte function and erythrocyte differentiation. The polypeptide is Transferrin receptor protein 2 (TFR2) (Homo sapiens (Human)).